The chain runs to 563 residues: Cytochrome P450 monooxygenase phqL (563 aa).

3 helical membrane-spanning segments follow: residues 20-40 (ENFS…IIIF), 52-72 (IPVG…FVPG), and 80-100 (ALWL…VSIL). Asparagine 279 carries an N-linked (GlcNAc...) asparagine glycan. The helical transmembrane segment at 362-382 (LVIFAGSGTVAVTIIGCLYFL) threads the bilayer. Asparagine 419 carries an N-linked (GlcNAc...) asparagine glycan. Residue cysteine 502 participates in heme binding.

This sequence belongs to the cytochrome P450 family. Requires heme as cofactor.

It localises to the membrane. The protein operates within alkaloid biosynthesis. In terms of biological role, cytochrome P450 monooxygenase; part of the gene cluster that mediates the biosynthesis of paraherquamide, a fungal indole alkaloid that belongs to a family of natural products containing a characteristic bicyclo[2.2.2]diazaoctane core. The first steps in the biosynthesis of paraherquamide is the production of the beta-methyl-proline precursor from L-isoleucine. They require oxidation of a terminally hydroxylated L-isoleucine to the corresponding aldehyde by enzymes which have still to be identified. Spontaneous cyclization and dehydration would yield the 4-methyl pyrolline-5-carboxylic acid, which is then reduced by the pyrroline-5-carboxylate reductase phqD leading to the beta-methyl-proline precursor. The next step of paraherquamide biosynthesis involves coupling of beta-methyl-proline and L-tryptophan by the bimodular NRPS phqB, to produce a monooxopiperazine intermediate. The reductase (R) domain of phqB utilizes NADPH for hydride transfer to reduce the thioester bond of the T domain-tethered linear dipeptide to a hemithioaminal intermediate, which spontaneously cleaves the C-S bond to release the aldehyde product. This compound undergoes spontaneous cyclization and dehydration to give a dienamine which is reverse prenylated at C-2 by the reverse prenyltransferase phqJ. The other prenyltransferase present in the cluster, phqI may be a redundant gene in the pathway. During biosynthetic assembly, the key step to produce the polycyclic core is catalyzed by the bifunctional reductase and intramolecular [4+2] Diels-Alderase, phqE, resulting in formation of the [2.2.2] diazaoctane intermediate preparaherquamide. Following formation of preparaherquamide, an indole 2,3-epoxidation-initiated pinacol-like rearrangement is catalyzed by the phqK FAD-dependent monooxygenase. The prenyltransferase phqA, the cytochrome P450 monooxygenase phqL, and the FAD-linked oxidoreductase phqH (or the cytochrome P450 monooxygenase phqM), are proposed to be involved in the formation of the pyran ring. The FAD-dependent monooxygenase phqK is likely responsible for generation of the spiro-oxindole, and the N-methylation is likely mediated by the phqN methyltransferase leading to the isolable natural product paraherquamide F. However, the order of these biosynthetic steps has still to be determined. In late-stage paraherquamide biosynthesis, the third P450 monooxygenase, phqO, is probably responsible for the C-14 hydroxylation, transforming paraherquamide F to paraherquamide G, and paraherquamide E to the final product paraherquamide A. The expansion from the 6-membered ring pyran (in paraherquamides F and G) to the 7-membered dioxepin ring (in paraherquamides A and E) represents a poorly understood but intriguing process that probably involves the 2-oxoglutarate-dependent dioxygenase phqC. Finally, the remaining members of the paraherquamide cluster, including phqI as well as phqM (or phqH), do not have a clearly prescribed role and appear to be redundant. This is Cytochrome P450 monooxygenase phqL from Penicillium fellutanum.